Reading from the N-terminus, the 93-residue chain is Cytochrome c oxidase polypeptide 6, mitochondrial (93 aa).

At 2–33 (STGNESYNLRYPKGFKGYPYNMYKLEGYGTPK) the chain is on the mitochondrial matrix side. A helical transmembrane segment spans residues 34–53 (GYITLIGVVATLTVSGLFFA). The Mitochondrial intermembrane segment spans residues 54-93 (KTRSNKREYPTHNKEWRAKTLAYAKETNADPIYQLPKDKI).

This sequence belongs to the cytochrome c oxidase IV family. As to quaternary structure, component of the cytochrome c oxidase (complex IV, CIV), a multisubunit enzyme composed of a catalytic core of 3 subunits and seevral supernumerary subunits. The complex exists as a monomer or a dimer and forms supercomplexes (SCs) in the inner mitochondrial membrane with ubiquinol-cytochrome c oxidoreductase (cytochrome b-c1 complex, complex III, CIII).

It is found in the mitochondrion inner membrane. It participates in energy metabolism; oxidative phosphorylation. Component of the cytochrome c oxidase, the last enzyme in the mitochondrial electron transport chain which drives oxidative phosphorylation. The respiratory chain contains 3 multisubunit complexes succinate dehydrogenase (complex II, CII), ubiquinol-cytochrome c oxidoreductase (cytochrome b-c1 complex, complex III, CIII) and cytochrome c oxidase (complex IV, CIV), that cooperate to transfer electrons derived from NADH and succinate to molecular oxygen, creating an electrochemical gradient over the inner membrane that drives transmembrane transport and the ATP synthase. Cytochrome c oxidase is the component of the respiratory chain that catalyzes the reduction of oxygen to water. Electrons originating from reduced cytochrome c in the intermembrane space (IMS) are transferred via the dinuclear copper A center (CU(A)) of subunit 2 and heme A of subunit 1 to the active site in subunit 1, a binuclear center (BNC) formed by heme A3 and copper B (CU(B)). The BNC reduces molecular oxygen to 2 water molecules using 4 electrons from cytochrome c in the IMS and 4 protons from the mitochondrial matrix. This chain is Cytochrome c oxidase polypeptide 6, mitochondrial (cxfA), found in Dictyostelium discoideum (Social amoeba).